The sequence spans 1012 residues: DNA polymerase catalytic subunit (1012 aa).

The protein belongs to the DNA polymerase type-B family.

The protein localises to the host nucleus. It carries out the reaction DNA(n) + a 2'-deoxyribonucleoside 5'-triphosphate = DNA(n+1) + diphosphate. This chain is DNA polymerase catalytic subunit (U38), found in Homo sapiens (Human).